The following is a 149-amino-acid chain: uncharacterized protein (149 aa).

The next 3 helical transmembrane spans lie at 39–61 (VPLG…LIIG), 82–104 (VFGY…GAIL), and 119–141 (WMMM…SIYL).

This sequence to M.pneumoniae MPN_090.

It localises to the cell membrane. This is an uncharacterized protein from Mycoplasma pneumoniae (strain ATCC 29342 / M129 / Subtype 1) (Mycoplasmoides pneumoniae).